The chain runs to 217 residues: Ras-related protein Rab-19 (217 aa).

GTP-binding residues include S26, V28, G29, K30, T31, C32, Y42, S43, E44, S45, and T49. T31 contacts Mg(2+). The Switch 1 signature appears at 39-54 (SGVYSESQQNTIGVDF). T49 and D72 together coordinate Mg(2+). The short motif at 74-89 (AGQERFRTITQSYYRS) is the Switch 2 element. Residues G75, N130, K131, D133, S161, A162, and K163 each coordinate GTP. Residues C215 and C217 are each lipidated (S-geranylgeranyl cysteine). A Cysteine methyl ester modification is found at C217.

This sequence belongs to the small GTPase superfamily. Rab family. Mg(2+) serves as cofactor.

Its subcellular location is the cell membrane. The catalysed reaction is GTP + H2O = GDP + phosphate + H(+). With respect to regulation, regulated by guanine nucleotide exchange factors (GEFs) which promote the exchange of bound GDP for free GTP. Regulated by GTPase activating proteins (GAPs) which increase the GTP hydrolysis activity. Inhibited by GDP dissociation inhibitors (GDIs). In terms of biological role, the small GTPases Rab are key regulators of intracellular membrane trafficking, from the formation of transport vesicles to their fusion with membranes. Rabs cycle between an inactive GDP-bound form and an active GTP-bound form that is able to recruit to membranes different set of downstream effectors directly responsible for vesicle formation, movement, tethering and fusion. The polypeptide is Ras-related protein Rab-19 (Rattus norvegicus (Rat)).